The chain runs to 322 residues: Tetrahydromethanopterin S-methyltransferase subunit H (322 aa).

The protein belongs to the MtrH family. As to quaternary structure, the complex is composed of 8 subunits; MtrA, MtrB, MtrC, MtrD, MtrE, MtrF, MtrG and MtrH.

It catalyses the reaction 5-methyl-5,6,7,8-tetrahydromethanopterin + coenzyme M + 2 Na(+)(in) = 5,6,7,8-tetrahydromethanopterin + methyl-coenzyme M + 2 Na(+)(out). It participates in one-carbon metabolism; methanogenesis from CO(2); methyl-coenzyme M from 5,10-methylene-5,6,7,8-tetrahydromethanopterin: step 2/2. Part of a complex that catalyzes the formation of methyl-coenzyme M and tetrahydromethanopterin from coenzyme M and methyl-tetrahydromethanopterin. This is an energy-conserving, sodium-ion translocating step. MtrH catalyzes the transfer of the methyl group from methyl-tetrahydromethanopterin to the corrinoid prosthetic group of MtrA. In Methanopyrus kandleri (strain AV19 / DSM 6324 / JCM 9639 / NBRC 100938), this protein is Tetrahydromethanopterin S-methyltransferase subunit H.